We begin with the raw amino-acid sequence, 436 residues long: Adenylosuccinate synthetase (436 aa).

Residues 12-18 and 40-42 contribute to the GTP site; these read GDEGKGK and GHT. Asp-13 functions as the Proton acceptor in the catalytic mechanism. Residues Asp-13 and Gly-40 each contribute to the Mg(2+) site. IMP is bound by residues 13–16, 38–41, Thr-130, Arg-144, Gln-230, Thr-245, and Arg-309; these read DEGK and NAGH. His-41 acts as the Proton donor in catalysis. 305-311 is a binding site for substrate; it reads TTTGRPR. GTP contacts are provided by residues Arg-311, 337–339, and 419–421; these read KLD and SVG.

This sequence belongs to the adenylosuccinate synthetase family. Homodimer. Mg(2+) serves as cofactor.

It localises to the cytoplasm. It carries out the reaction IMP + L-aspartate + GTP = N(6)-(1,2-dicarboxyethyl)-AMP + GDP + phosphate + 2 H(+). It participates in purine metabolism; AMP biosynthesis via de novo pathway; AMP from IMP: step 1/2. Plays an important role in the de novo pathway of purine nucleotide biosynthesis. Catalyzes the first committed step in the biosynthesis of AMP from IMP. The chain is Adenylosuccinate synthetase from Myxococcus xanthus (strain DK1622).